The following is a 366-amino-acid chain: Capsular polysaccharide phosphotransferase LcbA (366 aa).

The protein belongs to the stealth family.

This Neisseria meningitidis protein is Capsular polysaccharide phosphotransferase LcbA (lcbA).